The sequence spans 336 residues: MTTDNLNSADTTVQTLRNVLTSETEPLARRFRALFSLKHLACLQPPTEKTLPAIQAIAAGFSSASALLKHELAYCLGQTRNTDALPFLLDVVQDTQEDSMCRHEAAEALGALGYESSLEVLKALRDNENEVDVVRETCDIAVDRILWEQSEARKAEKLKPSDFTSIDPAPPMPLTAKEPSIPDLEKTLLDTNLPLFERYRAMFGLRDLASPPDLPTAKQAVQSLAKGMKDPSALFRHEIAFVFGQLCHPASVPSLTETLSDLNEVGMVRHEAAEALGSLGDVEGVEDTLKKFLNDPEKVVRDSIIVALDMAEFEKNGEIEYALIPDSGNPAAVPAA.

HEAT-like PBS-type repeat units follow at residues 68–94 and 101–127; these read LKHE…VVQD and CRHE…LRDN. Positions 70, 71, 103, and 104 each coordinate Fe cation. Residues 158–179 form a disordered region; the sequence is LKPSDFTSIDPAPPMPLTAKEP. HEAT-like PBS-type repeat units lie at residues 235 to 261 and 268 to 295; these read FRHE…TLSD and VRHE…FLND. Fe cation-binding residues include His-237, Glu-238, His-270, and Glu-271.

It belongs to the deoxyhypusine hydroxylase family. Fe(2+) serves as cofactor.

The protein localises to the cytoplasm. It localises to the nucleus. The catalysed reaction is [eIF5A protein]-deoxyhypusine + AH2 + O2 = [eIF5A protein]-hypusine + A + H2O. Its pathway is protein modification; eIF5A hypusination. In terms of biological role, catalyzes the hydroxylation of the N(6)-(4-aminobutyl)-L-lysine intermediate to form hypusine, an essential post-translational modification only found in mature eIF-5A factor. In Emericella nidulans (strain FGSC A4 / ATCC 38163 / CBS 112.46 / NRRL 194 / M139) (Aspergillus nidulans), this protein is Deoxyhypusine hydroxylase (lia1).